A 224-amino-acid chain; its full sequence is MKVLILACLVALALARELEELNVPGEIVESLSSSEESITRINKKIEKFQSEEQQQTEDELQDKIHPFAQTQSLVYPFPGPIPNSLPQNIPPLTQTPVVVPPFLQPEVMGVSKVKEAMAPKHKEMPFPKYPVEPFTESQSLTLTDVENLHLPLPLLQSWMHQPHQPLPPTVMFPPQSVLSLSQSKVLPVPQKAVPYPQRDMPIQAFLLYQEPVLGPVRGPFPIIV.

A signal peptide spans 1–15; sequence MKVLILACLVALALA. Phosphoserine is present on residues Ser30, Ser32, Ser33, and Ser34. The residue at position 50 (Ser50) is a Phosphoserine; in variant A1, variant A2, variant A3, variant B, variant E, variant F, variant G and variant H.

Belongs to the beta-casein family. As to expression, mammary gland specific. Secreted in milk.

The protein localises to the secreted. In terms of biological role, important role in determination of the surface properties of the casein micelles. Functionally, casoparan acts as a macrophage activator, increasing the phagocytic activity of macrophages and peroxide release from macrophages. It also acts as a bradykinin-potentiating peptide. Its function is as follows. Casohypotensin acts as a bradykinin-potentiating peptide. Induces hypotension in rats. Acts as a strong competitive inhibitor of endo-oligopeptidase A. Antioxidant peptide has antioxidant activity. The protein is Beta-casein (CSN2) of Bos taurus (Bovine).